Here is a 74-residue protein sequence, read N- to C-terminus: VLIIAVLFLTACQLTTAETSSRGKQKHRALRSTDKNSRMTKRCTPAGDACDATTECCILFCNLATKKCQVPTFP.

The first 17 residues, 1-17 (VLIIAVLFLTACQLTTA), serve as a signal peptide directing secretion. The propeptide occupies 18 to 40 (ETSSRGKQKHRALRSTDKNSRMT). The interval 19 to 41 (TSSRGKQKHRALRSTDKNSRMTK) is disordered. 3 cysteine pairs are disulfide-bonded: Cys43–Cys57, Cys50–Cys61, and Cys56–Cys68.

Belongs to the conotoxin O1 superfamily. As to expression, expressed by the venom duct.

It is found in the secreted. The sequence is that of Conotoxin AbVII from Conus abbreviatus (Abbreviated cone).